Consider the following 388-residue polypeptide: Chaperone protein DnaJ (388 aa).

Positions 6 to 71 (DYYEILGVPR…EKRKLYDQFG (66 aa)) constitute a J domain. The CR-type zinc finger occupies 147–229 (GCEKEIPIYR…CGGTGNVRRQ (83 aa)). Residues Cys-160, Cys-163, Cys-177, Cys-180, Cys-203, Cys-206, Cys-217, and Cys-220 each contribute to the Zn(2+) site. 4 CXXCXGXG motif repeats span residues 160 to 167 (CSVCGGSG), 177 to 184 (CQKCGGTG), 203 to 210 (CDACGGTG), and 217 to 224 (CRECGGTG).

It belongs to the DnaJ family. Homodimer. Zn(2+) is required as a cofactor.

The protein localises to the cytoplasm. Functionally, participates actively in the response to hyperosmotic and heat shock by preventing the aggregation of stress-denatured proteins and by disaggregating proteins, also in an autonomous, DnaK-independent fashion. Unfolded proteins bind initially to DnaJ; upon interaction with the DnaJ-bound protein, DnaK hydrolyzes its bound ATP, resulting in the formation of a stable complex. GrpE releases ADP from DnaK; ATP binding to DnaK triggers the release of the substrate protein, thus completing the reaction cycle. Several rounds of ATP-dependent interactions between DnaJ, DnaK and GrpE are required for fully efficient folding. Also involved, together with DnaK and GrpE, in the DNA replication of plasmids through activation of initiation proteins. In Caldicellulosiruptor bescii (strain ATCC BAA-1888 / DSM 6725 / KCTC 15123 / Z-1320) (Anaerocellum thermophilum), this protein is Chaperone protein DnaJ.